The primary structure comprises 271 residues: Ribosomal RNA small subunit methyltransferase A (271 aa).

The S-adenosyl-L-methionine site is built by histidine 14, leucine 16, glycine 41, glutamate 63, aspartate 89, and asparagine 107.

This sequence belongs to the class I-like SAM-binding methyltransferase superfamily. rRNA adenine N(6)-methyltransferase family. RsmA subfamily.

The protein resides in the cytoplasm. It carries out the reaction adenosine(1518)/adenosine(1519) in 16S rRNA + 4 S-adenosyl-L-methionine = N(6)-dimethyladenosine(1518)/N(6)-dimethyladenosine(1519) in 16S rRNA + 4 S-adenosyl-L-homocysteine + 4 H(+). Functionally, specifically dimethylates two adjacent adenosines (A1518 and A1519) in the loop of a conserved hairpin near the 3'-end of 16S rRNA in the 30S particle. May play a critical role in biogenesis of 30S subunits. The protein is Ribosomal RNA small subunit methyltransferase A of Lawsonia intracellularis (strain PHE/MN1-00).